A 470-amino-acid polypeptide reads, in one-letter code: ATP synthase subunit beta (470 aa).

158 to 165 (GGAGVGKT) is a binding site for ATP.

Belongs to the ATPase alpha/beta chains family. As to quaternary structure, F-type ATPases have 2 components, CF(1) - the catalytic core - and CF(0) - the membrane proton channel. CF(1) has five subunits: alpha(3), beta(3), gamma(1), delta(1), epsilon(1). CF(0) has three main subunits: a(1), b(2) and c(9-12). The alpha and beta chains form an alternating ring which encloses part of the gamma chain. CF(1) is attached to CF(0) by a central stalk formed by the gamma and epsilon chains, while a peripheral stalk is formed by the delta and b chains.

It localises to the cell membrane. It catalyses the reaction ATP + H2O + 4 H(+)(in) = ADP + phosphate + 5 H(+)(out). In terms of biological role, produces ATP from ADP in the presence of a proton gradient across the membrane. The catalytic sites are hosted primarily by the beta subunits. In Shouchella clausii (strain KSM-K16) (Alkalihalobacillus clausii), this protein is ATP synthase subunit beta.